The primary structure comprises 313 residues: Acetyl-coenzyme A carboxylase carboxyl transferase subunit alpha (313 aa).

The 251-residue stretch at 42 to 292 (KSDKLLRDTY…GAAIGEELDK (251 aa)) folds into the CoA carboxyltransferase C-terminal domain.

Belongs to the AccA family. Acetyl-CoA carboxylase is a heterohexamer composed of biotin carboxyl carrier protein (AccB), biotin carboxylase (AccC) and two subunits each of ACCase subunit alpha (AccA) and ACCase subunit beta (AccD).

It is found in the cytoplasm. The catalysed reaction is N(6)-carboxybiotinyl-L-lysyl-[protein] + acetyl-CoA = N(6)-biotinyl-L-lysyl-[protein] + malonyl-CoA. Its pathway is lipid metabolism; malonyl-CoA biosynthesis; malonyl-CoA from acetyl-CoA: step 1/1. In terms of biological role, component of the acetyl coenzyme A carboxylase (ACC) complex. First, biotin carboxylase catalyzes the carboxylation of biotin on its carrier protein (BCCP) and then the CO(2) group is transferred by the carboxyltransferase to acetyl-CoA to form malonyl-CoA. This chain is Acetyl-coenzyme A carboxylase carboxyl transferase subunit alpha, found in Rhizorhabdus wittichii (strain DSM 6014 / CCUG 31198 / JCM 15750 / NBRC 105917 / EY 4224 / RW1) (Sphingomonas wittichii).